Reading from the N-terminus, the 155-residue chain is Aspartate carbamoyltransferase regulatory chain (155 aa).

Cys112, Cys117, Cys140, and Cys143 together coordinate Zn(2+).

It belongs to the PyrI family. In terms of assembly, contains catalytic and regulatory chains. Zn(2+) serves as cofactor.

Involved in allosteric regulation of aspartate carbamoyltransferase. The protein is Aspartate carbamoyltransferase regulatory chain of Phocaeicola vulgatus (strain ATCC 8482 / DSM 1447 / JCM 5826 / CCUG 4940 / NBRC 14291 / NCTC 11154) (Bacteroides vulgatus).